Consider the following 1173-residue polypeptide: BRCA2-interacting transcriptional repressor EMSY (1173 aa).

The region spanning 16–100 is the ENT domain; it reads CKRILRKLEL…EWSIEGRRLV (85 aa). Positions 149–177 are enriched in low complexity; that stretch reads STTSTPPSASAPSSSSAAVKSPRPASPAS. Disordered stretches follow at residues 149 to 179, 191 to 216, 676 to 720, 797 to 816, 905 to 998, 1020 to 1046, and 1139 to 1173; these read STTS…ASNV, KSVS…SSPV, NRSA…DAPP, SAEQ…ESDA, RVCE…GAQV, PRAP…EKPS, and DYTS…DQSQ. A compositionally biased stretch (low complexity) spans 683-693; the sequence is TTSTHTSAAAA. 2 stretches are compositionally biased toward low complexity: residues 911–921 and 937–953; these read SSSSSSSSSSS and SSSS…TPHT. Polar residues-rich tracts occupy residues 961 to 976 and 989 to 998; these read QAPT…TQLS and SSKTSSGAQV. The span at 1025–1040 shows a compositional bias: low complexity; sequence SSSSSSEAALKLQAES. A compositionally biased stretch (acidic residues) spans 1148 to 1159; sequence EQAMEQEVDSSN.

Homodimer.

The protein resides in the nucleus. Functionally, regulator which is able to repress transcription, possibly via its interaction with a multiprotein chromatin remodeling complex that modifies the chromatin. In Danio rerio (Zebrafish), this protein is BRCA2-interacting transcriptional repressor EMSY.